A 288-amino-acid polypeptide reads, in one-letter code: Phenazine biosynthesis-like domain-containing protein (288 aa).

The active site involves Glu-46.

The protein belongs to the PhzF family. In terms of assembly, interacts with UNRIP/MAWD.

The chain is Phenazine biosynthesis-like domain-containing protein (PBLD) from Bos taurus (Bovine).